A 355-amino-acid chain; its full sequence is Peptide chain release factor 1 (355 aa).

Q233 carries the N5-methylglutamine modification.

It belongs to the prokaryotic/mitochondrial release factor family. In terms of processing, methylated by PrmC. Methylation increases the termination efficiency of RF1.

It is found in the cytoplasm. Functionally, peptide chain release factor 1 directs the termination of translation in response to the peptide chain termination codons UAG and UAA. The protein is Peptide chain release factor 1 of Caldicellulosiruptor saccharolyticus (strain ATCC 43494 / DSM 8903 / Tp8T 6331).